We begin with the raw amino-acid sequence, 545 residues long: La-related protein 6B (545 aa).

The segment covering 1–10 has biased composition (polar residues); that stretch reads MADQQTLDSS. 3 disordered regions span residues 1–76, 105–187, and 382–545; these read MADQ…IPPP, LVPV…DSKT, and HQTK…VQAE. The span at 23–49 shows a compositional bias: low complexity; it reads SHSTSSTTSASSSSDPSLLRSLSLSRL. The span at 61–76 shows a compositional bias: pro residues; the sequence is TTPPLPQPPRMIIPPP. Residues 111-126 are compositionally biased toward basic residues; that stretch reads HHPHHRFHQHHHHNRH. Basic and acidic residues predominate over residues 154–173; the sequence is LVSKKNDRRDHSKRESKNDQ. Residues 174 to 185 show a composition bias toward polar residues; the sequence is VTETGASVSIDS. The HTH La-type RNA-binding domain occupies 187–278; sequence TGLPEDSIQK…RRISPITESA (92 aa). The 99-residue stretch at 285 to 383 folds into the RRM domain; it reads RIIVAENLPE…LKVRLMLKHQ (99 aa). Basic residues predominate over residues 448 to 464; the sequence is GQRKGRNRGRGKGRGRG. Low complexity predominate over residues 465–478; that stretch reads QPHQNQNQNNNHSH. Residues 479–497 show a composition bias toward basic residues; that stretch reads NQNHNHNGRGNHHHHHHHQ. A compositionally biased stretch (polar residues) spans 498–509; it reads VGTQPSNNPMNN. Low complexity predominate over residues 510 to 519; sequence MEQPGMGKQQ.

Its subcellular location is the nucleus. Transcriptional regulator. The chain is La-related protein 6B (LARP6B) from Arabidopsis thaliana (Mouse-ear cress).